The following is a 537-amino-acid chain: CTP synthase (537 aa).

The segment at 1-265 (MTKFIFVTGG…GKYLVKRLGL (265 aa)) is amidoligase domain. A CTP-binding site is contributed by serine 13. Serine 13 contacts UTP. 14–19 (GLGKGI) serves as a coordination point for ATP. Tyrosine 54 provides a ligand contact to L-glutamine. An ATP-binding site is contributed by aspartate 71. Mg(2+) contacts are provided by aspartate 71 and glutamate 139. Residues 146–148 (DIE), 186–191 (KTKPTQ), and lysine 222 contribute to the CTP site. UTP contacts are provided by residues 186–191 (KTKPTQ) and lysine 222. A Glutamine amidotransferase type-1 domain is found at 290 to 532 (EIAIVGKYVK…VKAAKEYKQE (243 aa)). Glycine 351 provides a ligand contact to L-glutamine. The active-site Nucleophile; for glutamine hydrolysis is the cysteine 378. L-glutamine is bound by residues 379–382 (FGFQ), glutamate 402, and arginine 459. Active-site residues include histidine 505 and glutamate 507.

Belongs to the CTP synthase family. In terms of assembly, homotetramer.

The enzyme catalyses UTP + L-glutamine + ATP + H2O = CTP + L-glutamate + ADP + phosphate + 2 H(+). It carries out the reaction L-glutamine + H2O = L-glutamate + NH4(+). It catalyses the reaction UTP + NH4(+) + ATP = CTP + ADP + phosphate + 2 H(+). It functions in the pathway pyrimidine metabolism; CTP biosynthesis via de novo pathway; CTP from UDP: step 2/2. With respect to regulation, allosterically activated by GTP, when glutamine is the substrate; GTP has no effect on the reaction when ammonia is the substrate. The allosteric effector GTP functions by stabilizing the protein conformation that binds the tetrahedral intermediate(s) formed during glutamine hydrolysis. Inhibited by the product CTP, via allosteric rather than competitive inhibition. Functionally, catalyzes the ATP-dependent amination of UTP to CTP with either L-glutamine or ammonia as the source of nitrogen. Regulates intracellular CTP levels through interactions with the four ribonucleotide triphosphates. The polypeptide is CTP synthase (Pyrococcus abyssi (strain GE5 / Orsay)).